The chain runs to 323 residues: METVLTARDLTRHYEVSRGLFKGHAQVRALNGVSFELEAGKTLAVVGESGCGKSTLARALTLIEEPTSGSLKIAGQEVKGASKDQRRQLRRDVQMVFQNPYASLNPRQKIGDQLAEPLLINTALSREERREKVQQMMRQVGLRPEHYQRYPHMFSGGQRQRIALARAMMLQPKVLVADEPTSALDVSIQAQVLNLFMDLQQQFRTAYVFISHNLAVVRHVADDVLVMYLGRPAEMGPADKLYENPLHPYTRALLSATPAIHPDPTKPKIRIQGELPNPLHPPEGCAFHKRCPYATERCRSEVPELRLLDQRQVACHHAEQFLG.

Residues 5–254 (LTARDLTRHY…PLHPYTRALL (250 aa)) enclose the ABC transporter domain. 47-54 (GESGCGKS) serves as a coordination point for ATP.

The protein belongs to the ABC transporter superfamily. In terms of assembly, the complex is composed of two ATP-binding proteins (DppD and DppF), two transmembrane proteins (DppB and DppC) and a solute-binding protein (DppA1-A5). Five orthologous SBPs (DppA1-A5) are present in P.aeruginosa, which increases the substrate specificity of the DppBCDF transporter.

It is found in the cell inner membrane. The enzyme catalyses a dipeptide(out) + ATP + H2O = a dipeptide(in) + ADP + phosphate + H(+). Part of the ABC transporter DppABCDF involved in the uptake of various di/tripeptides. Is also involved in the uptake of phaseolotoxin, a toxic tripeptide inhibiting the enzyme ornithine carbamoyltransferase. Responsible for energy coupling to the transport system. The polypeptide is Di/tripeptide transport ATP-binding protein DppF (Pseudomonas aeruginosa (strain UCBPP-PA14)).